The following is an 861-amino-acid chain: Glucans biosynthesis glucosyltransferase H (861 aa).

6 helical membrane-spanning segments follow: residues 142 to 162 (FILL…MKGI), 188 to 208 (VLPY…FCWV), 516 to 536 (VFLT…FLVL), 573 to 593 (LFST…MLIW), 600 to 620 (FGGV…SVLL), and 683 to 703 (FLWW…VSVI).

The protein belongs to the glycosyltransferase 2 family. OpgH subfamily.

It is found in the cell inner membrane. It participates in glycan metabolism; osmoregulated periplasmic glucan (OPG) biosynthesis. In terms of biological role, involved in the biosynthesis of osmoregulated periplasmic glucans (OPGs). The chain is Glucans biosynthesis glucosyltransferase H from Pseudomonas aeruginosa (strain UCBPP-PA14).